A 344-amino-acid polypeptide reads, in one-letter code: Arginine N-succinyltransferase (344 aa).

Leucine 125 provides a ligand contact to succinyl-CoA. Histidine 229 functions as the Proton donor in the catalytic mechanism.

The protein belongs to the arginine N-succinyltransferase family.

It carries out the reaction succinyl-CoA + L-arginine = N(2)-succinyl-L-arginine + CoA + H(+). Its pathway is amino-acid degradation; L-arginine degradation via AST pathway; L-glutamate and succinate from L-arginine: step 1/5. Functionally, catalyzes the transfer of succinyl-CoA to arginine to produce N(2)-succinylarginine. This chain is Arginine N-succinyltransferase, found in Salmonella arizonae (strain ATCC BAA-731 / CDC346-86 / RSK2980).